The primary structure comprises 425 residues: Probable aminotransferase tcpI (425 aa).

Residue Lys256 is modified to N6-(pyridoxal phosphate)lysine.

It belongs to the class-I pyridoxal-phosphate-dependent aminotransferase family. Pyridoxal 5'-phosphate is required as a cofactor.

It functions in the pathway secondary metabolite biosynthesis. In terms of biological role, probable aminotransferase; part of the gene cluster that mediates the biosynthesis of an unusual class of epipolythiodioxopiperazines (ETPs) lacking the reactive thiol group important for toxicity. Firstly, L-tyrosine is prenylated by tcpD, before undergoing condensation with L-glycine in a reaction catalyzed by the NRPS tcpP leading to the diketopiperazine (DKP) backbone. Afterwards the alpha-carbon of tyrosine is oxidized by the cytochrome P450 tcpC to form a hydroxyl group. However, in contrast other ETP biosynthesis pathways studied so far, tcpC is not able to bishydroxylate the DKP at both alpha-carbon positions, but hydroxylates the alpha-carbon of the tyrosine part and the nitrogen of the glycine part. The next steps involve an alpha,beta-elimination reaction catalyzed by tcpI, a methylation by the methyltransferase tcpN the action of the four enzyme cascade tcpG/K/J/I. Due to a dysfunctional cytochrome P450 monooxygenase tcpC, the pathway leads to the biosynthesis of probable non-toxic metabolites lacking the reactive thiol group. This is Probable aminotransferase tcpI from Claviceps purpurea (strain 20.1) (Ergot fungus).